Here is a 191-residue protein sequence, read N- to C-terminus: Thymidylate kinase (191 aa).

7–14 contacts ATP; it reads GVDGAGKS.

Belongs to the thymidylate kinase family.

The catalysed reaction is dTMP + ATP = dTDP + ADP. In terms of biological role, phosphorylation of dTMP to form dTDP in both de novo and salvage pathways of dTTP synthesis. This chain is Thymidylate kinase (tmk), found in Helicobacter pylori (strain ATCC 700392 / 26695) (Campylobacter pylori).